A 409-amino-acid polypeptide reads, in one-letter code: Multifunctional CCA protein (409 aa).

ATP contacts are provided by Gly8 and Arg11. The CTP site is built by Gly8 and Arg11. Mg(2+) is bound by residues Asp21 and Asp23. Residues Arg91, Arg137, and Arg140 each coordinate ATP. Residues Arg91, Arg137, and Arg140 each contribute to the CTP site. One can recognise an HD domain in the interval Thr228–Tyr329.

Belongs to the tRNA nucleotidyltransferase/poly(A) polymerase family. Bacterial CCA-adding enzyme type 1 subfamily. Monomer. Can also form homodimers and oligomers. Mg(2+) is required as a cofactor. Requires Ni(2+) as cofactor.

The enzyme catalyses a tRNA precursor + 2 CTP + ATP = a tRNA with a 3' CCA end + 3 diphosphate. It carries out the reaction a tRNA with a 3' CCA end + 2 CTP + ATP = a tRNA with a 3' CCACCA end + 3 diphosphate. Its function is as follows. Catalyzes the addition and repair of the essential 3'-terminal CCA sequence in tRNAs without using a nucleic acid template. Adds these three nucleotides in the order of C, C, and A to the tRNA nucleotide-73, using CTP and ATP as substrates and producing inorganic pyrophosphate. tRNA 3'-terminal CCA addition is required both for tRNA processing and repair. Also involved in tRNA surveillance by mediating tandem CCA addition to generate a CCACCA at the 3' terminus of unstable tRNAs. While stable tRNAs receive only 3'-terminal CCA, unstable tRNAs are marked with CCACCA and rapidly degraded. In Pseudomonas fluorescens (strain SBW25), this protein is Multifunctional CCA protein.